Consider the following 539-residue polypeptide: T-complex protein 1 subunit zeta (539 aa).

This sequence belongs to the TCP-1 chaperonin family. In terms of assembly, heterooligomeric complex of about 850 to 900 kDa that forms two stacked rings, 12 to 16 nm in diameter.

It is found in the cytoplasm. Functionally, molecular chaperone; assists the folding of proteins upon ATP hydrolysis. Known to play a role, in vitro, in the folding of actin and tubulin. The sequence is that of T-complex protein 1 subunit zeta (cct6) from Dictyostelium discoideum (Social amoeba).